A 513-amino-acid chain; its full sequence is ATP synthase subunit alpha (513 aa).

169 to 176 (GDRQIGKT) lines the ATP pocket.

The protein belongs to the ATPase alpha/beta chains family. F-type ATPases have 2 components, CF(1) - the catalytic core - and CF(0) - the membrane proton channel. CF(1) has five subunits: alpha(3), beta(3), gamma(1), delta(1), epsilon(1). CF(0) has three main subunits: a(1), b(2) and c(9-12). The alpha and beta chains form an alternating ring which encloses part of the gamma chain. CF(1) is attached to CF(0) by a central stalk formed by the gamma and epsilon chains, while a peripheral stalk is formed by the delta and b chains.

It is found in the cell inner membrane. It carries out the reaction ATP + H2O + 4 H(+)(in) = ADP + phosphate + 5 H(+)(out). In terms of biological role, produces ATP from ADP in the presence of a proton gradient across the membrane. The alpha chain is a regulatory subunit. This is ATP synthase subunit alpha from Francisella philomiragia subsp. philomiragia (strain ATCC 25017 / CCUG 19701 / FSC 153 / O#319-036).